Reading from the N-terminus, the 87-residue chain is Phosphoribosyl-ATP pyrophosphatase (87 aa).

The protein belongs to the PRA-PH family.

The protein resides in the cytoplasm. It carries out the reaction 1-(5-phospho-beta-D-ribosyl)-ATP + H2O = 1-(5-phospho-beta-D-ribosyl)-5'-AMP + diphosphate + H(+). It participates in amino-acid biosynthesis; L-histidine biosynthesis; L-histidine from 5-phospho-alpha-D-ribose 1-diphosphate: step 2/9. The polypeptide is Phosphoribosyl-ATP pyrophosphatase (Bifidobacterium animalis subsp. lactis (strain AD011)).